A 757-amino-acid chain; its full sequence is 5-methyltetrahydropteroyltriglutamate--homocysteine methyltransferase (757 aa).

5-methyltetrahydropteroyltri-L-glutamate-binding positions include 16–19 (RELK) and lysine 112. Residues 432 to 434 (IGS) and glutamate 485 contribute to the L-homocysteine site. L-methionine is bound by residues 432-434 (IGS) and glutamate 485. 5-methyltetrahydropteroyltri-L-glutamate is bound by residues 516-517 (RC) and tryptophan 562. Aspartate 600 contacts L-homocysteine. Aspartate 600 serves as a coordination point for L-methionine. Residue glutamate 606 participates in 5-methyltetrahydropteroyltri-L-glutamate binding. Zn(2+)-binding residues include histidine 642, cysteine 644, and glutamate 666. Histidine 695 (proton donor) is an active-site residue. A Zn(2+)-binding site is contributed by cysteine 727.

Belongs to the vitamin-B12 independent methionine synthase family. Requires Zn(2+) as cofactor.

It carries out the reaction 5-methyltetrahydropteroyltri-L-glutamate + L-homocysteine = tetrahydropteroyltri-L-glutamate + L-methionine. The protein operates within amino-acid biosynthesis; L-methionine biosynthesis via de novo pathway; L-methionine from L-homocysteine (MetE route): step 1/1. Functionally, catalyzes the transfer of a methyl group from 5-methyltetrahydrofolate to homocysteine resulting in methionine formation. The sequence is that of 5-methyltetrahydropteroyltriglutamate--homocysteine methyltransferase from Actinobacillus pleuropneumoniae serotype 5b (strain L20).